Reading from the N-terminus, the 87-residue chain is Cytochrome c6 (87 aa).

Residues C10, C13, H14, and M56 each coordinate heme c.

The protein belongs to the cytochrome c family. PetJ subfamily. Monomer. In terms of processing, binds 1 heme c group covalently per subunit.

The protein localises to the plastid. It localises to the chloroplast thylakoid lumen. Functions as an electron carrier between membrane-bound cytochrome b6-f and photosystem I in oxygenic photosynthesis. This Euglena gracilis protein is Cytochrome c6 (petJ).